Consider the following 483-residue polypeptide: Altronate oxidoreductase (483 aa).

18-29 provides a ligand contact to NAD(+); it reads IIQFGEGNFLRA.

It belongs to the mannitol dehydrogenase family. UxaB subfamily.

It catalyses the reaction D-altronate + NAD(+) = keto-D-tagaturonate + NADH + H(+). Its pathway is carbohydrate metabolism; pentose and glucuronate interconversion. This chain is Altronate oxidoreductase, found in Escherichia coli O6:K15:H31 (strain 536 / UPEC).